The primary structure comprises 699 residues: Elongation factor G 1 (699 aa).

The tr-type G domain occupies E8–I290. GTP is bound by residues A17–T24, D88–H92, and N142–D145.

Belongs to the TRAFAC class translation factor GTPase superfamily. Classic translation factor GTPase family. EF-G/EF-2 subfamily.

The protein localises to the cytoplasm. Catalyzes the GTP-dependent ribosomal translocation step during translation elongation. During this step, the ribosome changes from the pre-translocational (PRE) to the post-translocational (POST) state as the newly formed A-site-bound peptidyl-tRNA and P-site-bound deacylated tRNA move to the P and E sites, respectively. Catalyzes the coordinated movement of the two tRNA molecules, the mRNA and conformational changes in the ribosome. The polypeptide is Elongation factor G 1 (Vibrio vulnificus (strain YJ016)).